The sequence spans 205 residues: Recombination protein RecR (205 aa).

Residues 64–79 form a C4-type zinc finger; that stretch reads CSRCYFITQGDLCAIC. The Toprim domain maps to 87–182; that stretch reads RVICVVEEPL…RVTRLARGLP (96 aa).

Belongs to the RecR family.

Functionally, may play a role in DNA repair. It seems to be involved in an RecBC-independent recombinational process of DNA repair. It may act with RecF and RecO. The polypeptide is Recombination protein RecR (Roseiflexus sp. (strain RS-1)).